The primary structure comprises 267 residues: MGQKINPFGYRLGITENHRSKWFSDSNKAGERYRDFVLEDDQIRKEMSKDLERAGVSRIVIERTRDRVRVDIHTARPGIVIGRRGAEAERVRAKLEKLTGKQVQLNIFEVKNAALDAQLVAQGIAEQLTNRVTFRRAMRKAQQDAMRAGAKGIRIKLSGRLGGAEMSRSEFYREGRVPLQTLRALIDYGFFEAKTTYGRIGVKVWIYKGDMTESEFEEQQAQQNNRPGRRGGDRRPRRGNRSAAPQAAEAPKAEAPAEAAPAAETKE.

The KH type-2 domain occupies 43 to 111 (IRKEMSKDLE…QVQLNIFEVK (69 aa)). Residues 216 to 267 (FEEQQAQQNNRPGRRGGDRRPRRGNRSAAPQAAEAPKAEAPAEAAPAAETKE) form a disordered region. Over residues 241–267 (RSAAPQAAEAPKAEAPAEAAPAAETKE) the composition is skewed to low complexity.

This sequence belongs to the universal ribosomal protein uS3 family. As to quaternary structure, part of the 30S ribosomal subunit. Forms a tight complex with proteins S10 and S14.

Functionally, binds the lower part of the 30S subunit head. Binds mRNA in the 70S ribosome, positioning it for translation. The protein is Small ribosomal subunit protein uS3 of Bifidobacterium longum (strain DJO10A).